A 307-amino-acid polypeptide reads, in one-letter code: Aspartate carbamoyltransferase catalytic subunit (307 aa).

2 residues coordinate carbamoyl phosphate: arginine 54 and threonine 55. Lysine 83 is an L-aspartate binding site. The carbamoyl phosphate site is built by arginine 104, histidine 132, and glutamine 135. Residues arginine 165 and arginine 228 each contribute to the L-aspartate site. 2 residues coordinate carbamoyl phosphate: leucine 267 and proline 268.

This sequence belongs to the aspartate/ornithine carbamoyltransferase superfamily. ATCase family. As to quaternary structure, heterododecamer (2C3:3R2) of six catalytic PyrB chains organized as two trimers (C3), and six regulatory PyrI chains organized as three dimers (R2).

The catalysed reaction is carbamoyl phosphate + L-aspartate = N-carbamoyl-L-aspartate + phosphate + H(+). The protein operates within pyrimidine metabolism; UMP biosynthesis via de novo pathway; (S)-dihydroorotate from bicarbonate: step 2/3. In terms of biological role, catalyzes the condensation of carbamoyl phosphate and aspartate to form carbamoyl aspartate and inorganic phosphate, the committed step in the de novo pyrimidine nucleotide biosynthesis pathway. This chain is Aspartate carbamoyltransferase catalytic subunit, found in Clostridium botulinum (strain Eklund 17B / Type B).